A 582-amino-acid polypeptide reads, in one-letter code: Semenogelin-2 (582 aa).

Positions 1–23 are cleaved as a signal peptide; sequence MKSIILFVLSLLLILEKQAAVMG. Disordered regions lie at residues 25–65, 91–157, 171–192, 272–366, and 393–557; these read KGGS…SSSI, HKTT…GISS, LSKE…GSQS, NLNQ…KDIQ, and SNQD…HNTV. Residues 50–59 show a composition bias toward basic and acidic residues; sequence GQKDKQHTES. Basic residues predominate over residues 111–134; it reads QKGRDHVKPKRHFRLIVIHRKGGQ. Polar residues-rich tracts occupy residues 137-157 and 174-192; these read HGTQ…GISS and EQAS…GSQS. The segment covering 293 to 310 has biased composition (basic and acidic residues); sequence TEERQFNHGEKSVQKDVP. Over residues 325–335 the composition is skewed to polar residues; that stretch reads KSQNQVSIPSQ. Composition is skewed to basic and acidic residues over residues 336-345, 353-366, 396-405, and 413-426; these read DQEHGHKENK and TEER…KDIQ. Composition is skewed to polar residues over residues 427-437 and 445-455; these read KSVSKGSISIQ and KSQNQVTIPSQ. Residues 456 to 465 show a composition bias toward basic and acidic residues; the sequence is DQEHGHKENK. Composition is skewed to polar residues over residues 487 to 498 and 506 to 529; these read KDVSQSSLSFQT and SQIQ…NSGK. Positions 530 to 546 are enriched in basic and acidic residues; that stretch reads SADREQDLLSHEQESRY. The segment covering 547–557 has biased composition (polar residues); the sequence is QQKSSGAHNTV.

This sequence belongs to the semenogelin family. Interacts with SERPINA5.

It localises to the secreted. Functionally, participates in the formation of a gel matrix (sperm coagulum) entrapping the accessory gland secretions and ejaculated spermatozoa. This chain is Semenogelin-2 (SEMG2), found in Colobus guereza (Mantled guereza).